A 79-amino-acid polypeptide reads, in one-letter code: Antimicrobial peptide ToAP2 (79 aa).

An N-terminal signal peptide occupies residues 1–23 (MQFKKQLLVIFFAYFLVVNESEA). A propeptide spanning residues 50-79 (SLMKRELKNLYDPYQRSVEMERLLKELPLY) is cleaved from the precursor.

The protein belongs to the non-disulfide-bridged peptide (NDBP) superfamily. Medium-length antimicrobial peptide (group 3) family. Expressed by the venom gland.

The protein resides in the secreted. The protein localises to the target cell membrane. Functionally, antimicrobial peptide. Shows antibacterial activity against all M.massiliense bacterial strains tested. Has antifungal activity against Candida spp. and two Cryptococcus neoformans strains with MICs values ranging from 6.25 to 200 uM. Also shows an inhibitory activity on C.albicans biofilms at high concentrations. Exhibits chemotactic activity for monocytes, neutrophils, and eosinophils. Shows low cytotoxic activity and has weak hemolytic activity on human erythrocytes. In vivo, treatment of infected mice with M.massiliense reduces the bacterial load in the liver, lung, and spleen. May act by disrupting the integrity of the bacterial cell membrane. This chain is Antimicrobial peptide ToAP2, found in Tityus obscurus (Amazonian scorpion).